The primary structure comprises 80 residues: Exodeoxyribonuclease 7 small subunit (80 aa).

This sequence belongs to the XseB family. Heterooligomer composed of large and small subunits.

It localises to the cytoplasm. The enzyme catalyses Exonucleolytic cleavage in either 5'- to 3'- or 3'- to 5'-direction to yield nucleoside 5'-phosphates.. Bidirectionally degrades single-stranded DNA into large acid-insoluble oligonucleotides, which are then degraded further into small acid-soluble oligonucleotides. In Escherichia coli (strain SE11), this protein is Exodeoxyribonuclease 7 small subunit.